The chain runs to 235 residues: Exotoxin type C (235 aa).

The first 27 residues, 1 to 27 (MKKINIIKIVFIITVILISTISPIIKS), serve as a signal peptide directing secretion. Zn(2+) is bound by residues His194, His228, and Asp230.

It belongs to the staphylococcal/streptococcal toxin family.

Its function is as follows. Superantigen that acts as a causative agent of the symptoms associated with scarlet fever. Has been associated with streptococcal toxic shock-like disease and may play a role in the early events of rheumatic fever. Superantigens cross-link major histocompatibility complex (MHC) class II and T-cell receptor (TCR) molecules, resulting in an overstimulation of T-cells associated with a massive release of pyrogenic and inflammatory cytokines. The chain is Exotoxin type C (speC) from Streptococcus pyogenes serotype M1.